A 306-amino-acid chain; its full sequence is tRNA pseudouridine synthase B (306 aa).

Asp47 functions as the Nucleophile in the catalytic mechanism.

The protein belongs to the pseudouridine synthase TruB family. Type 1 subfamily.

The catalysed reaction is uridine(55) in tRNA = pseudouridine(55) in tRNA. In terms of biological role, responsible for synthesis of pseudouridine from uracil-55 in the psi GC loop of transfer RNAs. This is tRNA pseudouridine synthase B from Neisseria gonorrhoeae (strain ATCC 700825 / FA 1090).